Reading from the N-terminus, the 348-residue chain is NADH-ubiquinone oxidoreductase chain 2 (348 aa).

The next 10 membrane-spanning stretches (helical) occupy residues 2–22, 26–46, 55–75, 96–116, 149–169, 178–198, 199–219, 242–262, 276–296, and 323–343; these read SPYV…LTLF, WLMA…MMTY, AAIK…FAII, VLMT…FWVP, LNMK…GWGG, ILAY…MINP, SLAL…FLML, TAIL…GFMP, IIMA…YMRI, and INII…TPLL.

Belongs to the complex I subunit 2 family. Core subunit of respiratory chain NADH dehydrogenase (Complex I) which is composed of 45 different subunits. Interacts with TMEM242.

The protein localises to the mitochondrion inner membrane. It carries out the reaction a ubiquinone + NADH + 5 H(+)(in) = a ubiquinol + NAD(+) + 4 H(+)(out). In terms of biological role, core subunit of the mitochondrial membrane respiratory chain NADH dehydrogenase (Complex I) that is believed to belong to the minimal assembly required for catalysis. Complex I functions in the transfer of electrons from NADH to the respiratory chain. The immediate electron acceptor for the enzyme is believed to be ubiquinone. The chain is NADH-ubiquinone oxidoreductase chain 2 from Osphranter robustus (Wallaroo).